The following is a 521-amino-acid chain: Occludin (521 aa).

A disordered region spans residues Met1–Asn20. Topologically, residues Met1–Arg66 are cytoplasmic. The region spanning Ser60–Arg267 is the MARVEL domain. A helical membrane pass occupies residues Ile67 to Trp89. Residues Asp90 to Arg133 lie on the Extracellular side of the membrane. Residues Ala134–Val158 traverse the membrane as a helical segment. Over Ile159–Arg168 the chain is Cytoplasmic. Residues Tyr169 to Met193 traverse the membrane as a helical segment. The Extracellular segment spans residues Gly194–Glu241. An intrachain disulfide couples Cys214 to Cys235. Residues Ala242 to Val263 traverse the membrane as a helical segment. The Cytoplasmic segment spans residues Lys264–Pro521. Position 300 is a phosphoserine (Ser300). The interval Ser300–Val329 is disordered. Thr303 is modified (phosphothreonine). Phosphoserine is present on residues Ser311 and Ser319. At Ser338 the chain carries Phosphoserine; by PKC; in vitro. Ser358 is modified (phosphoserine). Positions Asp361 to Gly405 are disordered. Over residues Arg366–Thr375 the composition is skewed to polar residues. Tyr367 is modified (phosphotyrosine). 2 positions are modified to phosphoserine: Ser368 and Ser369. Positions Ala380–Gly389 are enriched in basic residues. A compositionally biased stretch (basic and acidic residues) spans Lys390 to Thr399. Residues Tyr397 and Tyr401 each carry the phosphotyrosine modification. Thr402 carries the post-translational modification Phosphothreonine; by PKC/PRKCH. Phosphothreonine is present on Thr403. At Ser407 the chain carries Phosphoserine. In terms of domain architecture, OCEL spans Glu413–Pro521. Residues Ser424–Gly488 adopt a coiled-coil conformation. The residue at position 489 (Ser489) is a Phosphoserine.

The protein belongs to the ELL/occludin family. Interacts with TJP1/ZO1. Interacts with VAPA. Interacts with CLDN1, CLDN6, CLDN9, CLDN11, CLDN12 and CLDN17. Interacts with PLSCR1. Interacts with LSR, ILDR1 and ILDR2. Interacts with TJP2/ZO2. Dephosphorylated by PTPRJ. May be phosphorylated by PKC during translocation to cell-cell contacts. Localized at tight junctions of both epithelial and endothelial cells. Highly expressed in the testis, kidney, lung, liver and brain. Not detected in skeletal muscle, spleen and heart.

It localises to the cell membrane. Its subcellular location is the cell junction. The protein resides in the tight junction. In terms of biological role, may play a role in the formation and regulation of the tight junction (TJ) paracellular permeability barrier. The polypeptide is Occludin (Ocln) (Mus musculus (Mouse)).